A 484-amino-acid polypeptide reads, in one-letter code: Cobyric acid synthase (484 aa).

The region spanning 248-435 (VLKVIVPVLP…LHGLFEGSQS (188 aa)) is the GATase cobBQ-type domain. Cys-329 acts as the Nucleophile in catalysis. Residue His-427 is part of the active site.

This sequence belongs to the CobB/CobQ family. CobQ subfamily.

The protein operates within cofactor biosynthesis; adenosylcobalamin biosynthesis. In terms of biological role, catalyzes amidations at positions B, D, E, and G on adenosylcobyrinic A,C-diamide. NH(2) groups are provided by glutamine, and one molecule of ATP is hydrogenolyzed for each amidation. This Pseudomonas putida (strain ATCC 700007 / DSM 6899 / JCM 31910 / BCRC 17059 / LMG 24140 / F1) protein is Cobyric acid synthase.